The primary structure comprises 698 residues: Polyribonucleotide nucleotidyltransferase (698 aa).

Mg(2+)-binding residues include Asp-486 and Asp-492. The region spanning Pro-553–Val-612 is the KH domain. Residues Gly-622–Lys-690 form the S1 motif domain.

This sequence belongs to the polyribonucleotide nucleotidyltransferase family. Mg(2+) serves as cofactor.

Its subcellular location is the cytoplasm. The catalysed reaction is RNA(n+1) + phosphate = RNA(n) + a ribonucleoside 5'-diphosphate. In terms of biological role, involved in mRNA degradation. Catalyzes the phosphorolysis of single-stranded polyribonucleotides processively in the 3'- to 5'-direction. This is Polyribonucleotide nucleotidyltransferase from Leptospira interrogans serogroup Icterohaemorrhagiae serovar copenhageni (strain Fiocruz L1-130).